Consider the following 316-residue polypeptide: N-acetylmuramic acid 6-phosphate etherase (316 aa).

Residues M1–N23 are disordered. The SIS domain maps to I66–K229. The active-site Proton donor is E94. E125 is an active-site residue.

The protein belongs to the GCKR-like family. MurNAc-6-P etherase subfamily. As to quaternary structure, homodimer.

The enzyme catalyses N-acetyl-D-muramate 6-phosphate + H2O = N-acetyl-D-glucosamine 6-phosphate + (R)-lactate. It functions in the pathway amino-sugar metabolism; N-acetylmuramate degradation. Functionally, specifically catalyzes the cleavage of the D-lactyl ether substituent of MurNAc 6-phosphate, producing GlcNAc 6-phosphate and D-lactate. This is N-acetylmuramic acid 6-phosphate etherase from Synechococcus sp. (strain CC9902).